The sequence spans 211 residues: 3,4-dihydroxy-2-butanone 4-phosphate synthase (211 aa).

D-ribulose 5-phosphate is bound by residues 37-38 (RE), aspartate 42, 150-154 (RIGHT), and glutamate 174. Glutamate 38 is a Mg(2+) binding site. Mg(2+) is bound at residue histidine 153.

It belongs to the DHBP synthase family. Homodimer. Requires Mg(2+) as cofactor. Mn(2+) serves as cofactor.

It carries out the reaction D-ribulose 5-phosphate = (2S)-2-hydroxy-3-oxobutyl phosphate + formate + H(+). The protein operates within cofactor biosynthesis; riboflavin biosynthesis; 2-hydroxy-3-oxobutyl phosphate from D-ribulose 5-phosphate: step 1/1. Its function is as follows. Catalyzes the conversion of D-ribulose 5-phosphate to formate and 3,4-dihydroxy-2-butanone 4-phosphate. The polypeptide is 3,4-dihydroxy-2-butanone 4-phosphate synthase (Buchnera aphidicola subsp. Baizongia pistaciae (strain Bp)).